The chain runs to 286 residues: 5'-3' exonuclease (286 aa).

A 5'-3' exonuclease domain is found at 172-270 (IKPKEFIDFL…IKLKDIILKK (99 aa)).

Functionally, 5'-3' exonuclease acting preferentially on double-stranded DNA. This Buchnera aphidicola subsp. Acyrthosiphon pisum (strain APS) (Acyrthosiphon pisum symbiotic bacterium) protein is 5'-3' exonuclease.